Reading from the N-terminus, the 236-residue chain is Leucyl/phenylalanyl-tRNA--protein transferase (236 aa).

The protein belongs to the L/F-transferase family.

Its subcellular location is the cytoplasm. The catalysed reaction is N-terminal L-lysyl-[protein] + L-leucyl-tRNA(Leu) = N-terminal L-leucyl-L-lysyl-[protein] + tRNA(Leu) + H(+). It catalyses the reaction N-terminal L-arginyl-[protein] + L-leucyl-tRNA(Leu) = N-terminal L-leucyl-L-arginyl-[protein] + tRNA(Leu) + H(+). The enzyme catalyses L-phenylalanyl-tRNA(Phe) + an N-terminal L-alpha-aminoacyl-[protein] = an N-terminal L-phenylalanyl-L-alpha-aminoacyl-[protein] + tRNA(Phe). Its function is as follows. Functions in the N-end rule pathway of protein degradation where it conjugates Leu, Phe and, less efficiently, Met from aminoacyl-tRNAs to the N-termini of proteins containing an N-terminal arginine or lysine. This is Leucyl/phenylalanyl-tRNA--protein transferase from Yersinia pseudotuberculosis serotype O:1b (strain IP 31758).